Here is a 425-residue protein sequence, read N- to C-terminus: Glutamyl-tRNA reductase (425 aa).

Substrate-binding positions include 49-52 (TCNR), Ser-107, 112-114 (EPQ), and Gln-118. The active-site Nucleophile is the Cys-50. Residue 187 to 192 (GAGETI) coordinates NADP(+).

Belongs to the glutamyl-tRNA reductase family. Homodimer.

The catalysed reaction is (S)-4-amino-5-oxopentanoate + tRNA(Glu) + NADP(+) = L-glutamyl-tRNA(Glu) + NADPH + H(+). Its pathway is porphyrin-containing compound metabolism; protoporphyrin-IX biosynthesis; 5-aminolevulinate from L-glutamyl-tRNA(Glu): step 1/2. Catalyzes the NADPH-dependent reduction of glutamyl-tRNA(Glu) to glutamate 1-semialdehyde (GSA). This chain is Glutamyl-tRNA reductase, found in Pseudomonas putida (strain ATCC 47054 / DSM 6125 / CFBP 8728 / NCIMB 11950 / KT2440).